A 281-amino-acid polypeptide reads, in one-letter code: MEMO1 family protein APE_1771 (281 aa).

It belongs to the MEMO1 family.

The polypeptide is MEMO1 family protein APE_1771 (Aeropyrum pernix (strain ATCC 700893 / DSM 11879 / JCM 9820 / NBRC 100138 / K1)).